We begin with the raw amino-acid sequence, 84 residues long: MAHKKGGGSTKNGRDSNPKYLGVKAAGGSTVSAGTIILRQRGTVIKPGNNAGIGRDHTIFSLIDGVVTFRNGRNNKKQVDILPC.

Positions Met-1 to Leu-21 are disordered.

It belongs to the bacterial ribosomal protein bL27 family.

This is Large ribosomal subunit protein bL27 from Chlorobium limicola (strain DSM 245 / NBRC 103803 / 6330).